The sequence spans 433 residues: Pectinesterase B (433 aa).

The N-terminal stretch at 1-21 (MSLTHYSGLAAAVSMSLILTA) is a signal peptide. The N-palmitoyl cysteine moiety is linked to residue cysteine 22. Residue cysteine 22 is the site of S-diacylglycerol cysteine attachment. Residues 22–433 (CGGQTPNSAR…EYNTQVLLHE (412 aa)) are Periplasmic-facing. Substrate-binding residues include threonine 202 and glutamine 236. The active-site Proton donor is the aspartate 259. The active-site Nucleophile is aspartate 292. Residues arginine 356 and tryptophan 358 each contribute to the substrate site.

Belongs to the pectinesterase family.

Its subcellular location is the cell outer membrane. It catalyses the reaction [(1-&gt;4)-alpha-D-galacturonosyl methyl ester](n) + n H2O = [(1-&gt;4)-alpha-D-galacturonosyl](n) + n methanol + n H(+). Its pathway is glycan metabolism; pectin degradation; 2-dehydro-3-deoxy-D-gluconate from pectin: step 1/5. In terms of biological role, probably involved in the degradation of methylated oligogalacturonides present in the periplasm. More active on methylated oligogalacturides than on pectin. This chain is Pectinesterase B, found in Dickeya dadantii (strain 3937) (Erwinia chrysanthemi (strain 3937)).